Consider the following 949-residue polypeptide: MAGTMHLLTAVSLILMLSSANAESTVYNLLTSPDCLPDLLHGGLAEQGVTELYILTTFRIQPGTGNTIFSLYNPRDNSKYFEFSVFGKANKAILRYLRRDGRMSAVTFNKLNLADGEKHRLLFHLKGLEVGHPGGFPHSQGALPVPGVELHLDCRLVETLRDLPAVFNGLNNHQAVELKTMQGKAQEGLEELKLAYGDSVENVASLQDCHTQSDSVQALGLNTKQLTTQMLELTKVINELKDVLIQQVKETSFLRNTISECQACGLSGAEVVKPKCAPGVCFRDDMCIETAEGVECGPCPDGYTGDGYSCDDVDECQFNPCFPGVRCVNMAPGFRCEACPLGFTGKPLEGVGVAYAQTHKQVCDDIDECKGPDNGGCTANSICVNSVGSYQCGRCKTGFTGDQIRGCKPEKSCGNRLQNPCDPNAQCTEERDGTITCQCGIGWAGNGYLCGKDTDIDGYPDERLRCRDPTCRKDNCVTVPNSGQEDADGDGKGDACDPDADGDGILNEQDNCWLTPNINQQNSDKDSHGDACDNCVRVDNPDQRDTDSDGLGDACDDDMDGDGLKNFLDNCQRVKNRDQLDRDGDGVGDACDSCPDIPNPNQSDIDNDLVGDSCDTNQDSDGDGHQDSKDNCPMVINSSQLDTDKDGIGDECDDDDDNDGIPDSLPPGPDNCRLVPNPEQIDDNNDGVGDICESDFDQDKVIDRIDNCPENAEITLTDFRAYQTVVLDPEGDAQIDPNWVVLNQGMEIVQTMNSDPGLAVGYTAFSGVDFEGTFHVNTVTDDDYAGFIFGYQDSSSFYVVMWKQTEQTYWQATPFRAVAEPGIQLKAVKSKTGPGEHLRNSLWHTGDTNDQVRLLWKDPRNVGWKDKVSYRWYLQHRPQVGYIRVRFYEGTELVADSGVTIDTTMRGGRLGVFCFSQENIIWSNLKYRCNDTIPEDFQEFSTQHGMDPL.

A signal peptide spans 1–22; that stretch reads MAGTMHLLTAVSLILMLSSANA. Residues 23–198 enclose the Laminin G-like domain; the sequence is ESTVYNLLTS…LEELKLAYGD (176 aa). Disulfide bonds link cysteine 276–cysteine 287, cysteine 281–cysteine 296, cysteine 299–cysteine 310, cysteine 316–cysteine 327, cysteine 321–cysteine 336, cysteine 339–cysteine 363, cysteine 369–cysteine 383, cysteine 377–cysteine 392, cysteine 395–cysteine 407, cysteine 413–cysteine 427, cysteine 421–cysteine 437, cysteine 439–cysteine 450, cysteine 466–cysteine 471, cysteine 476–cysteine 496, cysteine 512–cysteine 532, cysteine 535–cysteine 555, cysteine 571–cysteine 591, cysteine 594–cysteine 614, cysteine 632–cysteine 652, cysteine 672–cysteine 692, and cysteine 708–cysteine 929. In terms of domain architecture, EGF-like 1; calcium-binding spans 312–349; the sequence is DVDECQFNPCFPGVRCVNMAPGFRCEACPLGFTGKPLE. The EGF-like 2; calcium-binding domain maps to 365–408; that stretch reads DIDECKGPDNGGCTANSICVNSVGSYQCGRCKTGFTGDQIRGCK. Positions 409 to 451 constitute an EGF-like 3 domain; sequence PEKSCGNRLQNPCDPNAQCTEERDGTITCQCGIGWAGNGYLCG. TSP type-3 repeat units follow at residues 452-484, 485-520, 521-543, 544-579, 580-602, 603-640, 641-680, and 681-716; these read KDTD…NSGQ, EDAD…NINQ, QNSD…NPDQ, RDTD…NRDQ, LDRD…NPNQ, SDID…NSSQ, LDTD…NPEQ, and IDDN…EITL. Positions 578 to 671 are disordered; that stretch reads DQLDRDGDGV…PDSLPPGPDN (94 aa). Asparagine 601 and asparagine 637 each carry an N-linked (GlcNAc...) asparagine glycan. The span at 649 to 660 shows a compositional bias: acidic residues; that stretch reads GDECDDDDDNDG. A TSP C-terminal domain is found at 720–934; that stretch reads RAYQTVVLDP…LKYRCNDTIP (215 aa). A glycan (N-linked (GlcNAc...) asparagine) is linked at asparagine 930.

The protein belongs to the thrombospondin family. As to quaternary structure, homotrimer; disulfide-linked.

It is found in the endoplasmic reticulum. It localises to the sarcoplasmic reticulum. The protein resides in the secreted. Its subcellular location is the extracellular space. The protein localises to the extracellular matrix. Its function is as follows. Adhesive glycoprotein that mediates cell-to-cell and cell-to-matrix interactions and may be involved in various processes including cellular proliferation, migration, adhesion and attachment. May play a role in ER stress response. The polypeptide is Thrombospondin-4-B (thbs4b) (Danio rerio (Zebrafish)).